A 739-amino-acid polypeptide reads, in one-letter code: Potassium transporter 26 (739 aa).

Topologically, residues 1–81 (MEYHHRPHSP…RQVALLSFQS (81 aa)) are cytoplasmic. A helical membrane pass occupies residues 82–102 (LGVVYGDLGTSPLYVFSSISL). Residues 103-112 (DDPGEADFVG) lie on the Extracellular side of the membrane. Residues 113 to 133 (ILSIILWTFTMICLVKYVFIV) traverse the membrane as a helical segment. The Cytoplasmic segment spans residues 134–198 (LKADDHGEGG…KFLEQSTKWQ (65 aa)). A helical membrane pass occupies residues 199–219 (AVITYIVLAGTCMVLGDGALT). The Extracellular segment spans residues 220 to 236 (PAISVLSAVQGIQSRSS). Residues 237–257 (SITQAHVVLLSVIILFILFFF) traverse the membrane as a helical segment. At 258–268 (QKHGTSKVSFT) the chain is on the cytoplasmic side. The helical transmembrane segment at 269-289 (FSPIMILWFTFVAFIGLYNII) threads the bilayer. The Extracellular portion of the chain corresponds to 290–318 (KHYPPILKAVSPHYIIIYFIRNKRAAWET). Residues 319 to 339 (LGAIVLCITGAEAMFADLGHF) form a helical membrane-spanning segment. The Cytoplasmic portion of the chain corresponds to 340-347 (NKSSIQMA). Residues 348–368 (FSVIVYPSMILAYAGQAAFLV) form a helical membrane-spanning segment. Topologically, residues 369–385 (KNPSKLSTTFYSSTPEP) are extracellular. A helical transmembrane segment spans residues 386-406 (LFWPMFIIATLAAIVASQALI). At 407 to 437 (SASFSIIRQSIALGCFPRVTMKHTSGKHEGQ) the chain is on the cytoplasmic side. The chain crosses the membrane as a helical span at residues 438 to 458 (VYSPEINYFLMVACILITVGF). Residues 459-469 (KGGPEIGQAFG) lie on the Extracellular side of the membrane. A helical transmembrane segment spans residues 470–490 (VAVIFVMLFTTNLMTVVMLII). Over 491 to 494 (WESN) the chain is Cytoplasmic. Residues 495-515 (IALASLFFVFFFSIEGIYMTS) traverse the membrane as a helical segment. Residues 516 to 519 (LMNK) lie on the Extracellular side of the membrane. A helical membrane pass occupies residues 520–540 (ILQGGWVPFAITAFFLIITLS). Residues 541-739 (WTYGRSKKGE…TLQVGMLYEI (199 aa)) lie on the Cytoplasmic side of the membrane.

Belongs to the HAK/KUP transporter (TC 2.A.72.3) family.

The protein resides in the membrane. High-affinity potassium transporter. The polypeptide is Potassium transporter 26 (HAK26) (Oryza sativa subsp. japonica (Rice)).